We begin with the raw amino-acid sequence, 506 residues long: MRAIISVYRKEGIDKLAKALQELGYEIVSTGGTAKYLREKGISVKEVSEITGFPEILEGRVKTLHPVVHGGILFRDWVEKDKEEIEKHGIKPIDVVVVNLYPFEEKLKEGLTDKDLMEFIDIGGPTLIRAAAKNFFRVVILVDPEDYDWVIEKLKKGNLTLQDRAYLAWKAFSHTAYYDGVISQAFKKLYSIDTFGKEEALPLKRMQKLRYGENPHQRGFLYENPLEDIGITKAQVLQGKEMSFNNYLDADSAVRLVAEFPNQTVCAIIKHNNPCGVALGSSVKEAFLRAKEADPVSAFGGIVAFNDKVDGETAKELTSMFLEVVIAPDYDEEALRELSRKKNLRVIRFFGFQHAFDVKKVSGGYLLQDEDTVLYEKLQVVTKREPTAEEMEDLLFAWKVVKHTKSNAVVIAKNGQTLGIGSGNVSRVDSLKCAINKAKEFGFDLKGAVVASEAFFPFRDSIDIMAKEGITAVIQPGGSIRDQEVIDACNEHGIAMIFTGLRHFKH.

One can recognise an MGS-like domain in the interval 1-142 (MRAIISVYRK…KNFFRVVILV (142 aa)).

It belongs to the PurH family.

The catalysed reaction is (6R)-10-formyltetrahydrofolate + 5-amino-1-(5-phospho-beta-D-ribosyl)imidazole-4-carboxamide = 5-formamido-1-(5-phospho-D-ribosyl)imidazole-4-carboxamide + (6S)-5,6,7,8-tetrahydrofolate. It catalyses the reaction IMP + H2O = 5-formamido-1-(5-phospho-D-ribosyl)imidazole-4-carboxamide. It functions in the pathway purine metabolism; IMP biosynthesis via de novo pathway; 5-formamido-1-(5-phospho-D-ribosyl)imidazole-4-carboxamide from 5-amino-1-(5-phospho-D-ribosyl)imidazole-4-carboxamide (10-formyl THF route): step 1/1. It participates in purine metabolism; IMP biosynthesis via de novo pathway; IMP from 5-formamido-1-(5-phospho-D-ribosyl)imidazole-4-carboxamide: step 1/1. This chain is Bifunctional purine biosynthesis protein PurH, found in Aquifex aeolicus (strain VF5).